Consider the following 420-residue polypeptide: 3-phosphoshikimate 1-carboxyvinyltransferase (420 aa).

3-phosphoshikimate-binding residues include K20, S21, and R25. Residue K20 coordinates phosphoenolpyruvate. 2 residues coordinate phosphoenolpyruvate: G90 and R118. Residues S159, S160, Q161, S187, D303, and K330 each contribute to the 3-phosphoshikimate site. Residue Q161 coordinates phosphoenolpyruvate. D303 functions as the Proton acceptor in the catalytic mechanism. The phosphoenolpyruvate site is built by R334, R376, and K402.

It belongs to the EPSP synthase family. Monomer.

Its subcellular location is the cytoplasm. It carries out the reaction 3-phosphoshikimate + phosphoenolpyruvate = 5-O-(1-carboxyvinyl)-3-phosphoshikimate + phosphate. It participates in metabolic intermediate biosynthesis; chorismate biosynthesis; chorismate from D-erythrose 4-phosphate and phosphoenolpyruvate: step 6/7. Functionally, catalyzes the transfer of the enolpyruvyl moiety of phosphoenolpyruvate (PEP) to the 5-hydroxyl of shikimate-3-phosphate (S3P) to produce enolpyruvyl shikimate-3-phosphate and inorganic phosphate. The sequence is that of 3-phosphoshikimate 1-carboxyvinyltransferase from Brachyspira hyodysenteriae (strain ATCC 49526 / WA1).